Reading from the N-terminus, the 432-residue chain is Tyrosine--tRNA ligase (432 aa).

The short motif at 46 to 55 (PTRPDLHLGH) is the 'HIGH' region element. Positions 232 to 236 (KMSKS) match the 'KMSKS' region motif. K235 serves as a coordination point for ATP. Residues 369–430 (IWVARLFTLA…GKDRFVRVRL (62 aa)) enclose the S4 RNA-binding domain.

The protein belongs to the class-I aminoacyl-tRNA synthetase family. TyrS type 2 subfamily. As to quaternary structure, homodimer.

The protein localises to the cytoplasm. It carries out the reaction tRNA(Tyr) + L-tyrosine + ATP = L-tyrosyl-tRNA(Tyr) + AMP + diphosphate + H(+). In terms of biological role, catalyzes the attachment of tyrosine to tRNA(Tyr) in a two-step reaction: tyrosine is first activated by ATP to form Tyr-AMP and then transferred to the acceptor end of tRNA(Tyr). This Thermus thermophilus (strain ATCC BAA-163 / DSM 7039 / HB27) protein is Tyrosine--tRNA ligase.